Consider the following 104-residue polypeptide: L-rhamnose mutarotase (104 aa).

A substrate-binding site is contributed by Tyr-18. The active-site Proton donor is His-22. Substrate-binding positions include Tyr-41 and 76 to 77 (WW).

Belongs to the rhamnose mutarotase family. As to quaternary structure, homodimer.

Its subcellular location is the cytoplasm. It carries out the reaction alpha-L-rhamnose = beta-L-rhamnose. The protein operates within carbohydrate metabolism; L-rhamnose metabolism. Involved in the anomeric conversion of L-rhamnose. The polypeptide is L-rhamnose mutarotase (Escherichia fergusonii (strain ATCC 35469 / DSM 13698 / CCUG 18766 / IAM 14443 / JCM 21226 / LMG 7866 / NBRC 102419 / NCTC 12128 / CDC 0568-73)).